The following is a 204-amino-acid chain: MTHFSQQDNFSVAARVLGALFYYAPESAEAAPLVAVLTRDGWETQWPLPEASLAPLVTAFQTQSEETHAQAWQRLFVGPWALPSPPWGSVWLDRESVLFGDSTLALRQWMREKGIQFEMKQNEPEDHFGSLLLMAAWLAENGRQTECEELLAWHLFPWSTRFLDVFIEKAEHPFYRALGELARLTLAQWQSQLLIPVAVKPLFR.

It belongs to the TorD/DmsD family. DmsD subfamily.

Required for biogenesis/assembly of DMSO reductase, but not for the interaction of the DmsA signal peptide with the Tat system. May be part of a chaperone cascade complex that facilitates a folding-maturation pathway for the substrate protein. This Escherichia coli O6:H1 (strain CFT073 / ATCC 700928 / UPEC) protein is Tat proofreading chaperone DmsD.